The chain runs to 90 residues: MAIFKSISSISNLTGSMGSSIGASNLNGFASNDNSISCFDGGCGGSGGLGGWSGLSGWGGIGGFNGGCGGSNTNIINLDIDICRRRRRCC.

Belongs to the UPF0512 family.

This chain is UPF0512 protein L, found in Dictyostelium discoideum (Social amoeba).